Here is a 475-residue protein sequence, read N- to C-terminus: ATP synthase subunit beta (475 aa).

Residue 152–159 participates in ATP binding; sequence GGAGVGKT.

The protein belongs to the ATPase alpha/beta chains family. As to quaternary structure, F-type ATPases have 2 components, CF(1) - the catalytic core - and CF(0) - the membrane proton channel. CF(1) has five subunits: alpha(3), beta(3), gamma(1), delta(1), epsilon(1). CF(0) has three main subunits: a(1), b(2) and c(9-12). The alpha and beta chains form an alternating ring which encloses part of the gamma chain. CF(1) is attached to CF(0) by a central stalk formed by the gamma and epsilon chains, while a peripheral stalk is formed by the delta and b chains.

The protein resides in the cell membrane. It catalyses the reaction ATP + H2O + 4 H(+)(in) = ADP + phosphate + 5 H(+)(out). Produces ATP from ADP in the presence of a proton gradient across the membrane. The catalytic sites are hosted primarily by the beta subunits. This Wolbachia pipientis wMel protein is ATP synthase subunit beta.